Consider the following 454-residue polypeptide: Bifunctional protein GlmU (454 aa).

The interval M1–R226 is pyrophosphorylase. Residues L8–G11, K22, Q73, G78–T79, Y100–D102, G137, E151, N166, and N224 each bind UDP-N-acetyl-alpha-D-glucosamine. Residue D102 participates in Mg(2+) binding. Residue N224 participates in Mg(2+) binding. The linker stretch occupies residues L227–Q247. Residues G248–K454 form an N-acetyltransferase region. R330 and K348 together coordinate UDP-N-acetyl-alpha-D-glucosamine. H360 (proton acceptor) is an active-site residue. Residues Y363 and N374 each coordinate UDP-N-acetyl-alpha-D-glucosamine. Residues A377, N383–Y384, S402, A420, and R437 each bind acetyl-CoA.

This sequence in the N-terminal section; belongs to the N-acetylglucosamine-1-phosphate uridyltransferase family. In the C-terminal section; belongs to the transferase hexapeptide repeat family. In terms of assembly, homotrimer. Mg(2+) is required as a cofactor.

Its subcellular location is the cytoplasm. The catalysed reaction is alpha-D-glucosamine 1-phosphate + acetyl-CoA = N-acetyl-alpha-D-glucosamine 1-phosphate + CoA + H(+). It catalyses the reaction N-acetyl-alpha-D-glucosamine 1-phosphate + UTP + H(+) = UDP-N-acetyl-alpha-D-glucosamine + diphosphate. It participates in nucleotide-sugar biosynthesis; UDP-N-acetyl-alpha-D-glucosamine biosynthesis; N-acetyl-alpha-D-glucosamine 1-phosphate from alpha-D-glucosamine 6-phosphate (route II): step 2/2. Its pathway is nucleotide-sugar biosynthesis; UDP-N-acetyl-alpha-D-glucosamine biosynthesis; UDP-N-acetyl-alpha-D-glucosamine from N-acetyl-alpha-D-glucosamine 1-phosphate: step 1/1. The protein operates within bacterial outer membrane biogenesis; LPS lipid A biosynthesis. In terms of biological role, catalyzes the last two sequential reactions in the de novo biosynthetic pathway for UDP-N-acetylglucosamine (UDP-GlcNAc). The C-terminal domain catalyzes the transfer of acetyl group from acetyl coenzyme A to glucosamine-1-phosphate (GlcN-1-P) to produce N-acetylglucosamine-1-phosphate (GlcNAc-1-P), which is converted into UDP-GlcNAc by the transfer of uridine 5-monophosphate (from uridine 5-triphosphate), a reaction catalyzed by the N-terminal domain. The chain is Bifunctional protein GlmU from Acinetobacter baumannii (strain AYE).